A 100-amino-acid chain; its full sequence is Phosphoribosyl-ATP pyrophosphatase (100 aa).

The protein belongs to the PRA-PH family.

The protein resides in the cytoplasm. It carries out the reaction 1-(5-phospho-beta-D-ribosyl)-ATP + H2O = 1-(5-phospho-beta-D-ribosyl)-5'-AMP + diphosphate + H(+). The protein operates within amino-acid biosynthesis; L-histidine biosynthesis; L-histidine from 5-phospho-alpha-D-ribose 1-diphosphate: step 2/9. The polypeptide is Phosphoribosyl-ATP pyrophosphatase (Haloquadratum walsbyi (strain DSM 16790 / HBSQ001)).